The primary structure comprises 596 residues: Probable protein S-acyltransferase 22 (596 aa).

The next 2 membrane-spanning stretches (helical) occupy residues Val-15–Phe-35 and Ile-44–Ala-64. Residues Thr-102–Glu-125 form a disordered region. The 51-residue stretch at Phe-163–Val-213 folds into the DHHC domain. The active-site S-palmitoyl cysteine intermediate is Cys-193. Helical transmembrane passes span Ala-215–Leu-235 and Leu-254–Pro-274. Disordered stretches follow at residues Ser-433 to Ser-455, Gln-498 to Asp-523, and Met-549 to Arg-596. Residues Gln-498–Ser-518 are compositionally biased toward polar residues. Residues Met-549–Ser-571 are compositionally biased toward low complexity.

Belongs to the DHHC palmitoyltransferase family.

It is found in the cell membrane. The protein localises to the cytoplasmic vesicle membrane. It catalyses the reaction L-cysteinyl-[protein] + hexadecanoyl-CoA = S-hexadecanoyl-L-cysteinyl-[protein] + CoA. In terms of biological role, palmitoyl acyltransferase. This is Probable protein S-acyltransferase 22 (PAT22) from Arabidopsis thaliana (Mouse-ear cress).